The primary structure comprises 90 residues: Small ribosomal subunit protein uS17 (90 aa).

This sequence belongs to the universal ribosomal protein uS17 family. Part of the 30S ribosomal subunit.

In terms of biological role, one of the primary rRNA binding proteins, it binds specifically to the 5'-end of 16S ribosomal RNA. The sequence is that of Small ribosomal subunit protein uS17 from Paraburkholderia phymatum (strain DSM 17167 / CIP 108236 / LMG 21445 / STM815) (Burkholderia phymatum).